Reading from the N-terminus, the 573-residue chain is Putative ABC transporter ATP-binding protein LJ_1704 (573 aa).

ABC transporter domains follow at residues 6-247 and 303-536; these read IEFK…GVRE and LKLD…ASLK. Residues 40-47 and 337-344 each bind ATP; these read GPSGSGKS and GQNGAGKT.

It belongs to the ABC transporter superfamily.

It is found in the cell membrane. Functionally, probably part of an ABC transporter complex. Responsible for energy coupling to the transport system. This is Putative ABC transporter ATP-binding protein LJ_1704 from Lactobacillus johnsonii (strain CNCM I-12250 / La1 / NCC 533).